Consider the following 452-residue polypeptide: MASPVQALLLDMDGVMAEVSQSYRQAIIDTARHFGVSVTHEDIDHTKLAGNANNDWQLTHRLVVDGLNGASSAPTLEAVTAQFEALYQGVGNTLGLCELETLLTPKGLLRELHRRQPKGMAVVTGRPRKDCAKFLTTHGIEDLFPVQIWLEDCPPKPSPEPILLALKALGVEACHAAMVGDTVDDIIAGRKAGAVAYGVLTPQTYAKSILEQTPAAIGKVLEQVGASVVLTPGLGELLDLVPAVPTASKAPTVNGKSGVREANISRVTKETSISVKLSLDGTGKSKVSSGIGFLDHMLTALAKHSRFDLELDCKGDTWIDDHHTTEDCALTLGEAFDVALGDRAGIARFGSACVPLDEALSRAIVDISSRAHSEINLQLVRPSVGELSSEMITHFFESFASAALXTLHVDVLRGRNDHHRAEASFKALAVALRTAVKHDATAGVPSTKGVLA.

The unknown activity stretch occupies residues 1-233 (MASPVQALLL…VGASVVLTPG (233 aa)). The interval 234–452 (LGELLDLVPA…GVPSTKGVLA (219 aa)) is imidazoleglycerol-phosphate dehydratase.

This sequence belongs to the imidazoleglycerol-phosphate dehydratase family.

The catalysed reaction is D-erythro-1-(imidazol-4-yl)glycerol 3-phosphate = 3-(imidazol-4-yl)-2-oxopropyl phosphate + H2O. The protein operates within amino-acid biosynthesis; L-histidine biosynthesis; L-histidine from 5-phospho-alpha-D-ribose 1-diphosphate: step 6/9. The sequence is that of Imidazoleglycerol-phosphate dehydratase (HIS3) from Phytophthora nicotianae (Potato buckeye rot agent).